The chain runs to 134 residues: Aspartate 1-decarboxylase (134 aa).

Serine 25 serves as the catalytic Schiff-base intermediate with substrate; via pyruvic acid. Serine 25 bears the Pyruvic acid (Ser) mark. A substrate-binding site is contributed by threonine 57. The active-site Proton donor is tyrosine 58. 73-75 (GAA) provides a ligand contact to substrate.

Belongs to the PanD family. As to quaternary structure, heterooctamer of four alpha and four beta subunits. It depends on pyruvate as a cofactor. Post-translationally, is synthesized initially as an inactive proenzyme, which is activated by self-cleavage at a specific serine bond to produce a beta-subunit with a hydroxyl group at its C-terminus and an alpha-subunit with a pyruvoyl group at its N-terminus.

It localises to the cytoplasm. It carries out the reaction L-aspartate + H(+) = beta-alanine + CO2. It participates in cofactor biosynthesis; (R)-pantothenate biosynthesis; beta-alanine from L-aspartate: step 1/1. In terms of biological role, catalyzes the pyruvoyl-dependent decarboxylation of aspartate to produce beta-alanine. The sequence is that of Aspartate 1-decarboxylase from Citrifermentans bemidjiense (strain ATCC BAA-1014 / DSM 16622 / JCM 12645 / Bem) (Geobacter bemidjiensis).